We begin with the raw amino-acid sequence, 236 residues long: MKTEQDLQELYFPTPKLIEWDNGVRQYSSVRGDTEVLLSYVPPHTNVEPHQHKEVQIGLVVSGELSMTVGDVTRKMTALESAYIAPPNVPHGARNETDQEVIAIDIKRLKAGETYTSPEDYFLNIFKTRDLLPGMEVTFFVEDWVEIMLANIPGNGGEMPFHKHRNEQIGICIGGGYDMTIEGCKVDMTFGTAYFCDPREDHGAINRFEKDSKSVNIFFPPRYNRAKAKKLEAKES.

Cupin type-1 domains are found at residues 40–106 (YVPP…AIDI) and 151–215 (NIPG…SKSV). Positions 50, 52, 56, 91, 162, 164, 168, and 202 each coordinate a divalent metal cation. Tyr-223 contributes to the substrate binding site.

In terms of assembly, monomer. It depends on Fe(2+) as a cofactor. The cofactor is Co(2+).

It localises to the cytoplasm. It catalyses the reaction 3-[(4R)-4-hydroxycyclohexa-1,5-dien-1-yl]-2-oxopropanoate = 3-[(1E,4R)-4-hydroxycyclohex-2-en-1-ylidene]pyruvate. Its pathway is antibiotic biosynthesis; bacilysin biosynthesis. In terms of biological role, part of the bacABCDEF operon responsible for the biosynthesis of the nonribosomally synthesized dipeptide antibiotic bacilysin, composed of L-alanine and L-anticapsin. Bacilysin is an irreversible inactivator of the glutaminase domain of glucosamine synthetase. BacB catalyzes the allylic isomerization of the endocyclic-delta(4),delta(8)-7R-dihydro-hydroxyphenylpyruvate (en-H2HPP) to generate a mixture of 3E,7R- and 3Z, 7R-olefins of the exocyclic-delta(3),delta(5)-dihydro-hydroxyphenylpyruvate (ex-H2HPP). The polypeptide is H2HPP isomerase (Bacillus subtilis).